Here is a 264-residue protein sequence, read N- to C-terminus: Glutamate 5-kinase (264 aa).

An ATP-binding site is contributed by Lys9. The substrate site is built by Ser47, Asp132, and Asn144. ATP is bound by residues Ser164–Asp165 and Thr206–Lys212.

Belongs to the glutamate 5-kinase family.

Its subcellular location is the cytoplasm. The enzyme catalyses L-glutamate + ATP = L-glutamyl 5-phosphate + ADP. It functions in the pathway amino-acid biosynthesis; L-proline biosynthesis; L-glutamate 5-semialdehyde from L-glutamate: step 1/2. Catalyzes the transfer of a phosphate group to glutamate to form L-glutamate 5-phosphate. The sequence is that of Glutamate 5-kinase from Helicobacter hepaticus (strain ATCC 51449 / 3B1).